Reading from the N-terminus, the 99-residue chain is RING finger protein Z (99 aa).

The N-myristoyl glycine; by host moiety is linked to residue glycine 2. The RING-type; atypical zinc finger occupies 31-67 (CKSCWFENKGLVECNNHYLCLNCLTLLLSVSNRCPIC). The tract at residues 74–99 (KLRPSAAPTAPPTGAADSIRPPPYSP) is disordered. The span at 77–89 (PSAAPTAPPTGAA) shows a compositional bias: low complexity. The short motif at 81 to 84 (PTAP) is the PTAP/PSAP motif element. Positions 94–97 (PPPY) match the PPXY motif motif.

This sequence belongs to the arenaviridae Z protein family. Interacts with protein NP; this interaction probably directs the encapsidated genome to budding sites. Interacts (via RING domain) with polymerase L; this interaction inhibits viral transcription and replication, Z partially blocks the product exit tunnel for the releasing nascent RNA product. Interacts with the glycoprotein complex; this interaction plays a role in virion budding. Interacts with host eIF4E; this interaction results in eIF4E reduced affinity for its substrate, the 5'-m7 G cap structure. Interacts (via late-budding domain) with host TSG101; this interaction is essential for budding and release of viral particles. Interacts with host RPLP0; this interaction may serve to load ribosome-like particles inside the virion. Interacts with host PML; this interaction induces PML bodies redistribution in the cytoplasm upon viral infection. Interacts with host TAX1BP1. In terms of processing, myristoylation is required for the role of RING finger protein Z in assembly and budding.

The protein resides in the virion. Its subcellular location is the host cytoplasm. The protein localises to the host perinuclear region. It is found in the host cell membrane. Its function is as follows. Plays a crucial role in virion assembly and budding. Expressed late in the virus life cycle, it acts as an inhibitor of viral transcription and RNA synthesis by interacting with the viral polymerase L. Presumably recruits the NP encapsidated genome to cellular membranes at budding sites via direct interaction with NP. Plays critical roles in the final steps of viral release by interacting with host TSG101, a member of the vacuolar protein-sorting pathway and using other cellular host proteins involved in vesicle formation pathway. The budding of the virus progeny occurs after association of protein Z with the viral glycoprotein complex SSP-GP1-GP2 at the cell periphery, step that requires myristoylation of protein Z. Also selectively represses protein production by associating with host eIF4E. In cell-based minigenome assay, has an inhibitory effect on the ribonucleoprotein machinery (vRNP), which is responsible for the replication and transcription of the viral genome. This chain is RING finger protein Z, found in Homo sapiens (Human).